The sequence spans 376 residues: Lipid-A-disaccharide synthase (376 aa).

This sequence belongs to the LpxB family.

The enzyme catalyses a lipid X + a UDP-2-N,3-O-bis[(3R)-3-hydroxyacyl]-alpha-D-glucosamine = a lipid A disaccharide + UDP + H(+). It functions in the pathway bacterial outer membrane biogenesis; LPS lipid A biosynthesis. Functionally, condensation of UDP-2,3-diacylglucosamine and 2,3-diacylglucosamine-1-phosphate to form lipid A disaccharide, a precursor of lipid A, a phosphorylated glycolipid that anchors the lipopolysaccharide to the outer membrane of the cell. The chain is Lipid-A-disaccharide synthase from Coxiella burnetii (strain CbuK_Q154) (Coxiella burnetii (strain Q154)).